The following is a 369-amino-acid chain: UPF0284 protein AM1_5137 (369 aa).

Belongs to the UPF0284 family.

The protein is UPF0284 protein AM1_5137 of Acaryochloris marina (strain MBIC 11017).